The sequence spans 91 residues: MTDAVDAEEIRHVADLARLRLDDEDVDTVVDHCGDILEHFERLEEVPEVDAEPELVNVMRADEIADSLDQDDALANAPETEDGRFKGPNVS.

The segment at leucine 68–serine 91 is disordered.

This sequence belongs to the GatC family. As to quaternary structure, heterotrimer of A, B and C subunits.

It carries out the reaction L-glutamyl-tRNA(Gln) + L-glutamine + ATP + H2O = L-glutaminyl-tRNA(Gln) + L-glutamate + ADP + phosphate + H(+). It catalyses the reaction L-aspartyl-tRNA(Asn) + L-glutamine + ATP + H2O = L-asparaginyl-tRNA(Asn) + L-glutamate + ADP + phosphate + 2 H(+). Its function is as follows. Allows the formation of correctly charged Asn-tRNA(Asn) or Gln-tRNA(Gln) through the transamidation of misacylated Asp-tRNA(Asn) or Glu-tRNA(Gln) in organisms which lack either or both of asparaginyl-tRNA or glutaminyl-tRNA synthetases. The reaction takes place in the presence of glutamine and ATP through an activated phospho-Asp-tRNA(Asn) or phospho-Glu-tRNA(Gln). The chain is Aspartyl/glutamyl-tRNA(Asn/Gln) amidotransferase subunit C from Halobacterium salinarum (strain ATCC 29341 / DSM 671 / R1).